We begin with the raw amino-acid sequence, 233 residues long: Ribosome maturation factor RimP (233 aa).

Basic and acidic residues predominate over residues 167–179; the sequence is RGKAAEREKKRDL. The disordered stretch occupies residues 167 to 233; sequence RGKAAEREKK…RARRGEIDPD (67 aa). Over residues 187–196 the composition is skewed to low complexity; the sequence is PHAKPAAQAK. Positions 220–233 are enriched in basic and acidic residues; that stretch reads LAADRARRGEIDPD.

Belongs to the RimP family.

It is found in the cytoplasm. Required for maturation of 30S ribosomal subunits. This is Ribosome maturation factor RimP from Bradyrhizobium sp. (strain ORS 278).